The following is a 513-amino-acid chain: 2-isopropylmalate synthase (513 aa).

One can recognise a Pyruvate carboxyltransferase domain in the interval 7-269 (VYIFDTTLRD…TTGIVTEELF (263 aa)). 4 residues coordinate Mn(2+): Asp-16, His-204, His-206, and Asn-240. The interval 393–513 (ALQFLSVHCG…KEEERTCPQL (121 aa)) is regulatory domain.

The protein belongs to the alpha-IPM synthase/homocitrate synthase family. LeuA type 1 subfamily. Homodimer. Requires Mn(2+) as cofactor.

The protein localises to the cytoplasm. It catalyses the reaction 3-methyl-2-oxobutanoate + acetyl-CoA + H2O = (2S)-2-isopropylmalate + CoA + H(+). It participates in amino-acid biosynthesis; L-leucine biosynthesis; L-leucine from 3-methyl-2-oxobutanoate: step 1/4. Catalyzes the condensation of the acetyl group of acetyl-CoA with 3-methyl-2-oxobutanoate (2-ketoisovalerate) to form 3-carboxy-3-hydroxy-4-methylpentanoate (2-isopropylmalate). The polypeptide is 2-isopropylmalate synthase (Solidesulfovibrio magneticus (strain ATCC 700980 / DSM 13731 / RS-1) (Desulfovibrio magneticus)).